Consider the following 606-residue polypeptide: UvrABC system protein C (606 aa).

A GIY-YIG domain is found at 14-93 (QNPGVYLMKD…IKKHSPRYNV (80 aa)). A UVR domain is found at 203 to 238 (PDLINRLKFEMQTEADLEHFERAAQIRDTILAIQTT).

It belongs to the UvrC family. Interacts with UvrB in an incision complex.

The protein resides in the cytoplasm. Its function is as follows. The UvrABC repair system catalyzes the recognition and processing of DNA lesions. UvrC both incises the 5' and 3' sides of the lesion. The N-terminal half is responsible for the 3' incision and the C-terminal half is responsible for the 5' incision. The protein is UvrABC system protein C of Desulforapulum autotrophicum (strain ATCC 43914 / DSM 3382 / VKM B-1955 / HRM2) (Desulfobacterium autotrophicum).